We begin with the raw amino-acid sequence, 390 residues long: S-adenosylmethionine synthase 4 (390 aa).

Glutamate 9 contributes to the Mg(2+) binding site. Histidine 15 contacts ATP. Residue glutamate 43 participates in K(+) binding. Glutamate 56 and glutamine 99 together coordinate L-methionine. ATP-binding positions include 167–169 (DGK), 235–238 (SGRF), aspartate 246, 252–253 (RK), alanine 269, lysine 273, and lysine 277. Aspartate 246 provides a ligand contact to L-methionine. Lysine 277 contacts L-methionine.

The protein belongs to the AdoMet synthase family. Homotetramer. Mn(2+) serves as cofactor. Requires Mg(2+) as cofactor. The cofactor is Co(2+). K(+) is required as a cofactor.

It is found in the cytoplasm. It catalyses the reaction L-methionine + ATP + H2O = S-adenosyl-L-methionine + phosphate + diphosphate. Its pathway is amino-acid biosynthesis; S-adenosyl-L-methionine biosynthesis; S-adenosyl-L-methionine from L-methionine: step 1/1. In terms of biological role, catalyzes the formation of S-adenosylmethionine from methionine and ATP. The reaction comprises two steps that are both catalyzed by the same enzyme: formation of S-adenosylmethionine (AdoMet) and triphosphate, and subsequent hydrolysis of the triphosphate. The polypeptide is S-adenosylmethionine synthase 4 (METK4) (Populus trichocarpa (Western balsam poplar)).